The chain runs to 170 residues: Photosystem II extrinsic protein V (170 aa).

The first 33 residues, methionine 1–alanine 33, serve as a signal peptide directing secretion. Heme c is bound by residues cysteine 70, cysteine 73, histidine 74, and histidine 125.

It belongs to the cytochrome c family. PsbV subfamily. In terms of assembly, PSII is composed of 1 copy each of membrane proteins PsbA, PsbB, PsbC, PsbD, PsbE, PsbF, PsbH, PsbI, PsbJ, PsbK, PsbL, PsbM, PsbT, PsbX, PsbY, Psb30/Ycf12, peripheral proteins PsbO, CyanoQ (PsbQ), PsbU, PsbV and a large number of cofactors. It forms dimeric complexes. Heme c is required as a cofactor.

The protein localises to the cellular thylakoid membrane. In terms of biological role, one of the extrinsic, lumenal subunits of photosystem II (PSII). PSII is a light-driven water plastoquinone oxidoreductase, using light energy to abstract electrons from H(2)O, generating a proton gradient subsequently used for ATP formation. The extrinsic proteins stabilize the structure of photosystem II oxygen-evolving complex (OEC), the ion environment of oxygen evolution and protect the OEC against heat-induced inactivation. Low-potential cytochrome c that plays a role in the OEC of PSII. The chain is Photosystem II extrinsic protein V from Prochlorococcus marinus (strain MIT 9303).